A 529-amino-acid polypeptide reads, in one-letter code: Arginine--tRNA ligase (529 aa).

A 'HIGH' region motif is present at residues 113–123 (ANPTGPLHIGH).

It belongs to the class-I aminoacyl-tRNA synthetase family. In terms of assembly, monomer.

It is found in the cytoplasm. The catalysed reaction is tRNA(Arg) + L-arginine + ATP = L-arginyl-tRNA(Arg) + AMP + diphosphate. The polypeptide is Arginine--tRNA ligase (Aliarcobacter butzleri (strain RM4018) (Arcobacter butzleri)).